The following is a 241-amino-acid chain: GLIPR1-like protein 1 (241 aa).

Positions 1–22 (MILRKKLSYLWTLGLCLVASKS) are cleaved as a signal peptide. Positions 39–172 (LRLHNEARTN…PDSALLVCNY (134 aa)) constitute an SCP domain. Ser220 carries GPI-anchor amidated serine lipidation. Residues 221–241 (GTRQLIACNPLYLISVLLTIF) constitute a propeptide, removed in mature form.

This sequence belongs to the CRISP family. Part of a oolemmal binding multimeric complex (IZUMO1 complex) composed at least of IZUMO1 and GLIPR1L1; the complex assemblage is influenced by the maturation status of the male germ cell. Interacts with IZUMO1. Post-translationally, N-glycosylated. N-glycosylation decreases during the transit in the caput. As to expression, highly expressed in testis, where it localizes to round and elongating spermatids and differentiated spermatozoa in the seminiferous tubules and epididymis (at protein level).

Its subcellular location is the cytoplasmic vesicle. It localises to the secretory vesicle. The protein localises to the acrosome. It is found in the cell membrane. The protein resides in the membrane raft. In terms of biological role, required for optimal fertilization at the stage of sperm-oocyte fusion, plays a role in optimizing acrosome function, the translocation of IZUMO1 during the acrosome reaction and the fertilization process. Component of epididymosomes, one type of membranous microvesicules which mediate the transfer of lipids and proteins to spermatozoa plasma membrane during epididymal maturation. Also a component of the CD9-positive microvesicules found in the cauda region. The chain is GLIPR1-like protein 1 from Bos taurus (Bovine).